The following is a 481-amino-acid chain: Sestrin-1 (481 aa).

The interval 63 to 244 (FADAFTDLGR…ICDITNGNHG (182 aa)) is N-terminal domain; may mediate the alkylhydroperoxide reductase activity. Catalysis depends on Cys-122, which acts as the Cysteine sulfenic acid (-SOH) intermediate. The disordered stretch occupies residues 295–316 (KTESMVFSTEDEDPPPDIDVSR). Residues 310–481 (PDIDVSRHFE…ALRAITRYMT (172 aa)) form a C-terminal domain; mediates TORC1 regulation region. Residues 375–378 (TYNT), Thr-387, and Glu-452 contribute to the L-leucine site.

This sequence belongs to the sestrin family.

Its subcellular location is the nucleus. It is found in the cytoplasm. It carries out the reaction a hydroperoxide + L-cysteinyl-[protein] = S-hydroxy-L-cysteinyl-[protein] + an alcohol. Functionally, may function as an intracellular leucine sensor that negatively regulates the TORC1 signaling pathway through the GATOR complex. In absence of leucine, binds the GATOR subcomplex GATOR2 and prevents TORC1 signaling. Binding of leucine to SESN2 disrupts its interaction with GATOR2 thereby activating the TORC1 signaling pathway. This stress-inducible metabolic regulator may also play a role in protection against oxidative and genotoxic stresses. May prevent the accumulation of reactive oxygen species (ROS) through the alkylhydroperoxide reductase activity born by the N-terminal domain of the protein. The protein is Sestrin-1 of Xenopus laevis (African clawed frog).